We begin with the raw amino-acid sequence, 1031 residues long: Putative protein TIC 214 N-terminal part (1031 aa).

A run of 6 helical transmembrane segments spans residues 11–31 (ILWA…LFGL), 68–88 (TLGQ…IMLL), 92–112 (AITL…KDLS), 127–147 (GIIQ…ILLP), 166–186 (SFFV…LINL), and 212–232 (TFSI…PVPF).

It belongs to the TIC214 family. As to quaternary structure, part of the Tic complex.

It localises to the plastid. The protein localises to the chloroplast inner membrane. Involved in protein precursor import into chloroplasts. May be part of an intermediate translocation complex acting as a protein-conducting channel at the inner envelope. This Anthoceros angustus (Hornwort) protein is Putative protein TIC 214 N-terminal part.